Reading from the N-terminus, the 457-residue chain is ATP synthase subunit beta (457 aa).

147-154 contributes to the ATP binding site; it reads GGAGVGKT.

It belongs to the ATPase alpha/beta chains family. F-type ATPases have 2 components, CF(1) - the catalytic core - and CF(0) - the membrane proton channel. CF(1) has five subunits: alpha(3), beta(3), gamma(1), delta(1), epsilon(1). CF(0) has three main subunits: a(1), b(2) and c(9-12). The alpha and beta chains form an alternating ring which encloses part of the gamma chain. CF(1) is attached to CF(0) by a central stalk formed by the gamma and epsilon chains, while a peripheral stalk is formed by the delta and b chains.

The protein resides in the cell inner membrane. It catalyses the reaction ATP + H2O + 4 H(+)(in) = ADP + phosphate + 5 H(+)(out). In terms of biological role, produces ATP from ADP in the presence of a proton gradient across the membrane. The catalytic sites are hosted primarily by the beta subunits. This is ATP synthase subunit beta from Actinobacillus pleuropneumoniae serotype 3 (strain JL03).